A 99-amino-acid chain; its full sequence is Large ribosomal subunit protein uL23 (99 aa).

In terms of assembly, contacts protein L29, and trigger factor when it is bound to the ribosome. Part of the 50S ribosomal subunit.

Its function is as follows. One of the early assembly proteins it binds 23S rRNA. One of the proteins that surrounds the polypeptide exit tunnel on the outside of the ribosome. Forms the main docking site for trigger factor binding to the ribosome. The protein is Large ribosomal subunit protein uL23 of Rhodopseudomonas palustris (strain ATCC BAA-98 / CGA009).